Consider the following 401-residue polypeptide: Probable peptidoglycan glycosyltransferase FtsW (401 aa).

Residues 1–26 (MAEVLRWLRLDLGQSGGLAWERLDWR) lie on the Cytoplasmic side of the membrane. The helical transmembrane segment at 27-47 (LALTVLALAGLGLVMVGSASV) threads the bilayer. At 48–65 (SIAEGATGDPLHYLYRQA) the chain is on the periplasmic side. A helical membrane pass occupies residues 66-86 (VFLAVALMAAVACLHLSLDQF). Topologically, residues 87–88 (YR) are cytoplasmic. A helical transmembrane segment spans residues 89 to 109 (GGPVLLVLGFFLLLVVLIPGV). The Periplasmic segment spans residues 110–118 (GREVNGATR). A helical membrane pass occupies residues 119–139 (WIPLGLINLQVAEVARVCFII). The Cytoplasmic portion of the chain corresponds to 140-154 (YLAGYCVRRHAELPN). A helical membrane pass occupies residues 155–175 (TSSAFAVPLAVFSLAAVLLLA). Residues 176-180 (QPDFG) lie on the Periplasmic side of the membrane. The helical transmembrane segment at 181–201 (TALVLMATALGLLFLAGASLW) threads the bilayer. A topological domain (cytoplasmic) is located at residue Arg-202. A helical membrane pass occupies residues 203–223 (IGVLGLLLAGAAWLLIVGSPY). Topologically, residues 224 to 278 (RWQRLTTFTDPWADPFNAGFQLTQSLIAIGRGEWFGVGLGASVQKLFYLPEAHTD) are periplasmic. The chain crosses the membrane as a helical span at residues 279–299 (FLFAVLAEELGLLGVVVVVAL). Topologically, residues 300-322 (FTYLAWRGMQIGLASLRADRPFG) are cytoplasmic. A helical transmembrane segment spans residues 323–343 (AYLAWGLTISIGLQAFINMAV). Over 344 to 354 (TMGLLPTKGLT) the chain is Periplasmic. Residues 355 to 375 (LPLMSYGGSSLIMTGIALALL) traverse the membrane as a helical segment. The Cytoplasmic portion of the chain corresponds to 376–401 (LRVDYEARLAAQQPRPRKRPSGRVRP).

The protein belongs to the SEDS family. FtsW subfamily.

The protein localises to the cell inner membrane. The enzyme catalyses [GlcNAc-(1-&gt;4)-Mur2Ac(oyl-L-Ala-gamma-D-Glu-L-Lys-D-Ala-D-Ala)](n)-di-trans,octa-cis-undecaprenyl diphosphate + beta-D-GlcNAc-(1-&gt;4)-Mur2Ac(oyl-L-Ala-gamma-D-Glu-L-Lys-D-Ala-D-Ala)-di-trans,octa-cis-undecaprenyl diphosphate = [GlcNAc-(1-&gt;4)-Mur2Ac(oyl-L-Ala-gamma-D-Glu-L-Lys-D-Ala-D-Ala)](n+1)-di-trans,octa-cis-undecaprenyl diphosphate + di-trans,octa-cis-undecaprenyl diphosphate + H(+). It participates in cell wall biogenesis; peptidoglycan biosynthesis. In terms of biological role, peptidoglycan polymerase that is essential for cell division. The sequence is that of Probable peptidoglycan glycosyltransferase FtsW from Alkalilimnicola ehrlichii (strain ATCC BAA-1101 / DSM 17681 / MLHE-1).